Consider the following 354-residue polypeptide: Neutral protease 2 homolog BCIN_12g06300 (354 aa).

Positions 1 to 19 are cleaved as a signal peptide; it reads MRSFSKILAVASLAAIANS. The propeptide occupies 20-179; the sequence is AVLKRDNNVL…PSSIDRRTVL (160 aa). Cystine bridges form between cysteine 183–cysteine 255 and cysteine 262–cysteine 280. Histidine 305 is a binding site for Zn(2+). Glutamate 306 is a catalytic residue. Histidine 309 and aspartate 320 together coordinate Zn(2+).

The protein belongs to the peptidase M35 family. The cofactor is Zn(2+).

The protein localises to the secreted. It carries out the reaction Preferential cleavage of bonds with hydrophobic residues in P1'. Also 3-Asn-|-Gln-4 and 8-Gly-|-Ser-9 bonds in insulin B chain.. Its function is as follows. Secreted metalloproteinase that allows assimilation of proteinaceous substrates. Shows high activities on basic nuclear substrates such as histone and protamine. The polypeptide is Neutral protease 2 homolog BCIN_12g06300 (Botryotinia fuckeliana (strain B05.10) (Noble rot fungus)).